Consider the following 292-residue polypeptide: Small ribosomal subunit biogenesis GTPase RsgA (292 aa).

One can recognise a CP-type G domain in the interval 65–223 (KTELIRPTVA…VVDTPGFSSL (159 aa)). GTP contacts are provided by residues 114 to 117 (NKLD) and 165 to 173 (GPSGVGKST). Cys247, Cys252, His254, and Cys260 together coordinate Zn(2+).

This sequence belongs to the TRAFAC class YlqF/YawG GTPase family. RsgA subfamily. In terms of assembly, monomer. Associates with 30S ribosomal subunit, binds 16S rRNA. It depends on Zn(2+) as a cofactor.

It is found in the cytoplasm. In terms of biological role, one of several proteins that assist in the late maturation steps of the functional core of the 30S ribosomal subunit. Helps release RbfA from mature subunits. May play a role in the assembly of ribosomal proteins into the subunit. Circularly permuted GTPase that catalyzes slow GTP hydrolysis, GTPase activity is stimulated by the 30S ribosomal subunit. The protein is Small ribosomal subunit biogenesis GTPase RsgA of Alkaliphilus metalliredigens (strain QYMF).